A 346-amino-acid chain; its full sequence is MSSSNLRVALVGSTGYTALEVARLLLTHPGADLVVATSRQDEGKPLSEIHPMLAGRCDVTLQPLDADVIAKSADVAMCCLPHGASAESVKQLAEAGMRVIDFSADFRLSSLETYQHWYGVKHPWPERIGDVVYGMPEFFADEIRSADIVANPGCYPTSAIMPLAPLVKAGLIETDDIIVDSKSGVSGAGRSPKLGTLYCETNESISAYAVGTHRHAPEIADLVERIAGAPIEVMFTPHLTPMDRGILSTIYVKPVGKAGSVEDAVRAMMSLLRDTYSDQPCVHVVDHLPATKYVAGTNHVQISVRPSGKRAVIVCAIDNLTKGASGAAVQNMNVMFGLPETAGLLM.

Residue Cys154 is part of the active site.

It belongs to the NAGSA dehydrogenase family. Type 1 subfamily.

The protein resides in the cytoplasm. It catalyses the reaction N-acetyl-L-glutamate 5-semialdehyde + phosphate + NADP(+) = N-acetyl-L-glutamyl 5-phosphate + NADPH + H(+). It participates in amino-acid biosynthesis; L-arginine biosynthesis; N(2)-acetyl-L-ornithine from L-glutamate: step 3/4. Catalyzes the NADPH-dependent reduction of N-acetyl-5-glutamyl phosphate to yield N-acetyl-L-glutamate 5-semialdehyde. This is N-acetyl-gamma-glutamyl-phosphate reductase from Rhodopirellula baltica (strain DSM 10527 / NCIMB 13988 / SH1).